Reading from the N-terminus, the 675-residue chain is Putative elongation factor TypA-like SVR3, chloroplastic (675 aa).

Residues 1–58 (MELSLSTSSASPAVLRRQASPLLHKQQVLGVSFASALKPGGGALRFPSRRPLPRPITC) constitute a chloroplast transit peptide. The disordered stretch occupies residues 43-76 (ALRFPSRRPLPRPITCSASPSTAEPASEVKKKQL). Positions 59–68 (SASPSTAEPA) are enriched in low complexity. In terms of domain architecture, tr-type G spans 80 to 275 (DNVRNIAIVA…AIIRCVPGPN (196 aa)).

Belongs to the TRAFAC class translation factor GTPase superfamily. Classic translation factor GTPase family. BipA subfamily.

Its subcellular location is the plastid. It localises to the chloroplast. Putative chloroplastic elongation factor involved in response to chilling stress. Required for proper chloroplast rRNA processing and/or translation at low temperature. Involved in plastid protein homeostasis. This Arabidopsis thaliana (Mouse-ear cress) protein is Putative elongation factor TypA-like SVR3, chloroplastic (SVR3).